Consider the following 256-residue polypeptide: Thioredoxin-dependent peroxide reductase, mitochondrial (256 aa).

The transit peptide at 1–61 (MAAAVGRLLR…KLFSTSSSCH (61 aa)) directs the protein to the mitochondrion. Positions 63 to 221 (PAVTQHAPYF…TLRLVKAFQY (159 aa)) constitute a Thioredoxin domain. Lysine 83 bears the N6-succinyllysine mark. The residue at position 91 (lysine 91) is an N6-acetyllysine; alternate. Lysine 91 bears the N6-succinyllysine; alternate mark. Cysteine 108 functions as the Cysteine sulfenic acid (-SOH) intermediate in the catalytic mechanism. At threonine 146 the chain carries Phosphothreonine.

It belongs to the peroxiredoxin family. AhpC/Prx1 subfamily. As to quaternary structure, homodimer; disulfide-linked, upon oxidation. 6 homodimers assemble to form a ring-like dodecamer. Interacts with NEK6. Interacts with LRRK2. Interacts with MAP3K13. Interacts with RPS6KC1 (via PX domain). In terms of processing, phosphorylated by LRRK2; phosphorylation reduces perodixase activity. Post-translationally, the enzyme can be inactivated by further oxidation of the cysteine sulfenic acid (C(P)-SOH) to sulphinic acid (C(P)-SO2H) and sulphonic acid (C(P)-SO3H) instead of its condensation to a disulfide bond. S-palmitoylated.

Its subcellular location is the mitochondrion. The protein resides in the cytoplasm. It localises to the early endosome. The catalysed reaction is a hydroperoxide + [thioredoxin]-dithiol = an alcohol + [thioredoxin]-disulfide + H2O. Functionally, thiol-specific peroxidase that catalyzes the reduction of hydrogen peroxide and organic hydroperoxides to water and alcohols, respectively. Plays a role in cell protection against oxidative stress by detoxifying peroxides. Acts synergistically with MAP3K13 to regulate the activation of NF-kappa-B in the cytosol. Required for the maintenance of physical strength. The sequence is that of Thioredoxin-dependent peroxide reductase, mitochondrial (PRDX3) from Homo sapiens (Human).